The following is a 941-amino-acid chain: ATP-dependent 6-phosphofructokinase subunit beta (941 aa).

The N-terminal catalytic PFK domain 1 stretch occupies residues 2–558; sequence PDASLFNGTS…HMKNFISTNS (557 aa). Residues G191, 255 to 256, and 285 to 288 contribute to the ATP site; these read RC and GDGS. Residue D286 participates in Mg(2+) binding. Beta-D-fructose 6-phosphate is bound by residues 331 to 333, R368, 375 to 377, E432, R460, and 466 to 469; these read SID, MGR, and HVQR. D333 (proton acceptor) is an active-site residue. The tract at residues 559-572 is interdomain linker; sequence ADHVPPSLPLEKRK. A C-terminal regulatory PFK domain 2 region spans residues 573 to 941; that stretch reads KVAIINVGAP…SDMLSGRTSL (369 aa). Residues R643, 701-705, R739, 746-748, E806, K832, 838-841, and R918 each bind beta-D-fructose 2,6-bisphosphate; these read TISNN, QGG, and HVQQ.

The protein belongs to the phosphofructokinase type A (PFKA) family. ATP-dependent PFK group I subfamily. Eukaryotic two domain clade 'E' sub-subfamily. In terms of assembly, heterododecamer of 4 alpha, 4 beta and 4 gamma chains. The gamma chain bridges the N-terminal halves of the alpha and beta subunits. Mg(2+) serves as cofactor.

It localises to the cytoplasm. The enzyme catalyses beta-D-fructose 6-phosphate + ATP = beta-D-fructose 1,6-bisphosphate + ADP + H(+). It functions in the pathway carbohydrate degradation; glycolysis; D-glyceraldehyde 3-phosphate and glycerone phosphate from D-glucose: step 3/4. With respect to regulation, allosterically activated by ADP, AMP, or fructose 2,6-bisphosphate, and allosterically inhibited by ATP or citrate. Functionally, catalyzes the phosphorylation of D-fructose 6-phosphate to fructose 1,6-bisphosphate by ATP, the first committing step of glycolysis. The sequence is that of ATP-dependent 6-phosphofructokinase subunit beta (PFK2) from Komagataella phaffii (strain GS115 / ATCC 20864) (Yeast).